Consider the following 1039-residue polypeptide: Error-prone DNA polymerase (1039 aa).

It belongs to the DNA polymerase type-C family. DnaE2 subfamily.

It localises to the cytoplasm. It catalyses the reaction DNA(n) + a 2'-deoxyribonucleoside 5'-triphosphate = DNA(n+1) + diphosphate. In terms of biological role, DNA polymerase involved in damage-induced mutagenesis and translesion synthesis (TLS). It is not the major replicative DNA polymerase. This Corynebacterium diphtheriae (strain ATCC 700971 / NCTC 13129 / Biotype gravis) protein is Error-prone DNA polymerase.